Reading from the N-terminus, the 686-residue chain is Envelope glycoprotein H (686 aa).

The signal sequence occupies residues 1-24 (MPASSVRLPLRLLTLAGLLALAGA). The Virion surface portion of the chain corresponds to 25 to 646 (AALARGAPQG…TSTRLAPVSP (622 aa)). Asn-77, Asn-162, Asn-542, Asn-604, and Asn-627 each carry an N-linked (GlcNAc...) asparagine; by host glycan. Residues 157-217 (PAAVFNVTLG…PPAGRFHVYT (61 aa)) are interaction with gL. The helical transmembrane segment at 647-667 (AYVVASVVGAAITVGILYALF) threads the bilayer. Topologically, residues 668–686 (KMLCSFSSEGYSRLINARS) are intravirion.

It belongs to the herpesviridae glycoprotein H family. As to quaternary structure, interacts with glycoprotein L (gL); this interaction is necessary for the correct processing and cell surface expression of gH. The heterodimer gH/gL seems to interact with gB trimers during fusion. N-glycosylated, O-glycosylated, and sialylated.

Its subcellular location is the virion membrane. It localises to the host cell membrane. The protein resides in the host endosome membrane. In terms of biological role, the heterodimer glycoprotein H-glycoprotein L is required for the fusion of viral and plasma membranes leading to virus entry into the host cell. Following initial binding to host receptor, membrane fusion is mediated by the fusion machinery composed of gB and the heterodimer gH/gL. May also be involved in the fusion between the virion envelope and the outer nuclear membrane during virion morphogenesis. The protein is Envelope glycoprotein H of Sus scrofa (Pig).